Consider the following 40-residue polypeptide: Dolichyl-diphosphooligosaccharide--protein glycosyltransferase subunit 4 (40 aa).

Topologically, residues 1 to 4 are lumenal; sequence MITD. The helical transmembrane segment at 5–25 threads the bilayer; sequence VQLAIFSNVLGVFLFLLVVAY. Topologically, residues 26–40 are cytoplasmic; that stretch reads HYINANTGKPSAKAK.

Belongs to the OST4 family. In terms of assembly, component of the oligosaccharyltransferase (OST) complex.

Its subcellular location is the endoplasmic reticulum membrane. Functionally, subunit of the oligosaccharyl transferase (OST) complex that catalyzes the initial transfer of a defined glycan (Glc(3)Man(9)GlcNAc(2) in eukaryotes) from the lipid carrier dolichol-pyrophosphate to an asparagine residue within an Asn-X-Ser/Thr consensus motif in nascent polypeptide chains, the first step in protein N-glycosylation. N-glycosylation occurs cotranslationally and the complex associates with the Sec61 complex at the channel-forming translocon complex that mediates protein translocation across the endoplasmic reticulum (ER). All subunits are required for a maximal enzyme activity. The polypeptide is Dolichyl-diphosphooligosaccharide--protein glycosyltransferase subunit 4 (Drosophila erecta (Fruit fly)).